We begin with the raw amino-acid sequence, 177 residues long: Probetacellulin (177 aa).

An N-terminal signal peptide occupies residues 1–31 (MDPTAPGSSVSSLPLLLVLALGLAILHCVVA). The Extracellular portion of the chain corresponds to 32–118 (DGNTTRTPET…LFYLQQDRGQ (87 aa)). 3 N-linked (GlcNAc...) asparagine glycosylation sites follow: asparagine 34, asparagine 42, and asparagine 52. The EGF-like domain maps to 65–105 (HFSRCPKQYKHYCIHGRCRFVVDEQTPSCICEKGYFGARCE). 3 disulfides stabilise this stretch: cysteine 69/cysteine 82, cysteine 77/cysteine 93, and cysteine 95/cysteine 104. Positions 112 to 177 (LQQDRGQILV…SEDIQETNIA (66 aa)) are cleaved as a propeptide — removed in mature form. A helical transmembrane segment spans residues 119–139 (ILVVCLIVVMVVFIILVIGVC). Residues 140 to 177 (TCCHPLRKHRKKKKEEKMETLDKDKTPISEDIQETNIA) lie on the Cytoplasmic side of the membrane. The interval 153–177 (KEEKMETLDKDKTPISEDIQETNIA) is disordered. The span at 154 to 167 (EEKMETLDKDKTPI) shows a compositional bias: basic and acidic residues.

In terms of assembly, monomer. Interacts with EGFR and ERBB4. In terms of tissue distribution, found in several mouse tissues including kidney, uterus and liver, as well as in beta tumor cell line and MCF-7 cells. It is not detected in the brain.

It is found in the secreted. The protein resides in the extracellular space. Its subcellular location is the cell membrane. Functionally, growth factor that binds to EGFR, ERBB4 and other EGF receptor family members. Potent mitogen for retinal pigment epithelial cells and vascular smooth muscle cells. This chain is Probetacellulin (Btc), found in Mus musculus (Mouse).